Reading from the N-terminus, the 340-residue chain is Ketol-acid reductoisomerase (NADP(+)) (340 aa).

In terms of domain architecture, KARI N-terminal Rossmann spans 1–183; that stretch reads MAITVYYDKD…GGGRTGIIET (183 aa). Residues 26–29, arginine 49, serine 52, serine 54, and 84–87 contribute to the NADP(+) site; these read FGSQ and DEIQ. The active site involves histidine 109. Glycine 135 contributes to the NADP(+) binding site. In terms of domain architecture, KARI C-terminal knotted spans 184 to 329; the sequence is TFKAETETDL…RNLRAMMPWI (146 aa). 4 residues coordinate Mg(2+): aspartate 192, glutamate 196, glutamate 228, and glutamate 232. Serine 253 contacts substrate.

It belongs to the ketol-acid reductoisomerase family. Mg(2+) serves as cofactor.

It catalyses the reaction (2R)-2,3-dihydroxy-3-methylbutanoate + NADP(+) = (2S)-2-acetolactate + NADPH + H(+). The catalysed reaction is (2R,3R)-2,3-dihydroxy-3-methylpentanoate + NADP(+) = (S)-2-ethyl-2-hydroxy-3-oxobutanoate + NADPH + H(+). The protein operates within amino-acid biosynthesis; L-isoleucine biosynthesis; L-isoleucine from 2-oxobutanoate: step 2/4. It functions in the pathway amino-acid biosynthesis; L-valine biosynthesis; L-valine from pyruvate: step 2/4. Involved in the biosynthesis of branched-chain amino acids (BCAA). Catalyzes an alkyl-migration followed by a ketol-acid reduction of (S)-2-acetolactate (S2AL) to yield (R)-2,3-dihydroxy-isovalerate. In the isomerase reaction, S2AL is rearranged via a Mg-dependent methyl migration to produce 3-hydroxy-3-methyl-2-ketobutyrate (HMKB). In the reductase reaction, this 2-ketoacid undergoes a metal-dependent reduction by NADPH to yield (R)-2,3-dihydroxy-isovalerate. The chain is Ketol-acid reductoisomerase (NADP(+)) from Campylobacter jejuni subsp. jejuni serotype O:6 (strain 81116 / NCTC 11828).